A 450-amino-acid chain; its full sequence is Na(+)/H(+) antiporter NhaA 2 (450 aa).

Helical transmembrane passes span 43-63, 86-106, 124-144, 155-175, 185-205, 208-228, 234-254, 258-278, 299-319, 326-346, 364-384, and 398-418; these read VGGA…NSPW, LTLG…VVGL, ALPM…FVAV, GWAI…AVIS, FLLT…AVFY, EINL…ALCV, SWWL…ESGV, VAGV…AGGP, VAVP…VSGL, PITL…IFLT, WIDV…SLLI, and FVKV…AVLL.

The protein belongs to the NhaA Na(+)/H(+) (TC 2.A.33) antiporter family.

It is found in the cell membrane. It catalyses the reaction Na(+)(in) + 2 H(+)(out) = Na(+)(out) + 2 H(+)(in). Na(+)/H(+) antiporter that extrudes sodium in exchange for external protons. The chain is Na(+)/H(+) antiporter NhaA 2 from Mycobacterium sp. (strain KMS).